The following is a 546-amino-acid chain: ATP synthase subunit alpha (546 aa).

172–179 contributes to the ATP binding site; that stretch reads GDRKTGKT.

It belongs to the ATPase alpha/beta chains family. As to quaternary structure, F-type ATPases have 2 components, CF(1) - the catalytic core - and CF(0) - the membrane proton channel. CF(1) has five subunits: alpha(3), beta(3), gamma(1), delta(1), epsilon(1). CF(0) has three main subunits: a(1), b(2) and c(9-12). The alpha and beta chains form an alternating ring which encloses part of the gamma chain. CF(1) is attached to CF(0) by a central stalk formed by the gamma and epsilon chains, while a peripheral stalk is formed by the delta and b chains.

The protein localises to the cell membrane. It carries out the reaction ATP + H2O + 4 H(+)(in) = ADP + phosphate + 5 H(+)(out). Its function is as follows. Produces ATP from ADP in the presence of a proton gradient across the membrane. The alpha chain is a regulatory subunit. This is ATP synthase subunit alpha from Corynebacterium efficiens (strain DSM 44549 / YS-314 / AJ 12310 / JCM 11189 / NBRC 100395).